Consider the following 231-residue polypeptide: UPF0758 protein aq_1610 (231 aa).

The MPN domain maps to 110–231; sequence SIRNPQEAFE…YFSFREEGVL (122 aa). The Zn(2+) site is built by H180, H182, and D193. The short motif at 180-193 is the JAMM motif element; it reads HNHPQGEPSPSNED.

It belongs to the UPF0758 family.

The polypeptide is UPF0758 protein aq_1610 (Aquifex aeolicus (strain VF5)).